Consider the following 185-residue polypeptide: Elongation factor P (185 aa).

This sequence belongs to the elongation factor P family.

Its subcellular location is the cytoplasm. It functions in the pathway protein biosynthesis; polypeptide chain elongation. Functionally, involved in peptide bond synthesis. Stimulates efficient translation and peptide-bond synthesis on native or reconstituted 70S ribosomes in vitro. Probably functions indirectly by altering the affinity of the ribosome for aminoacyl-tRNA, thus increasing their reactivity as acceptors for peptidyl transferase. The polypeptide is Elongation factor P (Thermoanaerobacter sp. (strain X514)).